A 245-amino-acid chain; its full sequence is Polyhedrin (245 aa).

This sequence belongs to the polyhedrin family.

Major component of the virus occlusion bodies, which are large proteinaceous structures (polyhedra), that protect the virus from the outside environment for extended periods until they are ingested by insect larvae. This Lepidoptera (butterflies and moths) protein is Polyhedrin.